A 108-amino-acid polypeptide reads, in one-letter code: MSFADTLRQLSSAEDFFSALHVDYDPQILNVARLHILRKMRLYLEADKGDLADESLQKQQYQHYLAQAYNDFVHSSPIKERLFKVHQEAVKPVKLPMVKLTSLTMPPE.

This sequence belongs to the NifW family. As to quaternary structure, homotrimer; associates with NifD.

Functionally, may protect the nitrogenase Fe-Mo protein from oxidative damage. This Zymomonas mobilis subsp. mobilis (strain ATCC 31821 / ZM4 / CP4) protein is Nitrogenase-stabilizing/protective protein NifW.